The sequence spans 140 residues: ATP synthase epsilon chain 1 (140 aa).

It belongs to the ATPase epsilon chain family. In terms of assembly, F-type ATPases have 2 components, CF(1) - the catalytic core - and CF(0) - the membrane proton channel. CF(1) has five subunits: alpha(3), beta(3), gamma(1), delta(1), epsilon(1). CF(0) has three main subunits: a, b and c.

It is found in the cell inner membrane. Its function is as follows. Produces ATP from ADP in the presence of a proton gradient across the membrane. The chain is ATP synthase epsilon chain 1 from Photobacterium profundum (strain SS9).